A 443-amino-acid polypeptide reads, in one-letter code: Transcriptional adapter 2-alpha (443 aa).

Position 6 is a phosphoserine (Ser-6). The segment at 12 to 69 (SDKPPCRGCSSYLMEPYIKCAECGPPPFFLCLQCFTRGFEYKKHQSDHTYEIMTSDFP) adopts a ZZ-type zinc-finger fold. 8 residues coordinate Zn(2+): Cys-17, Cys-20, Cys-31, Cys-34, Cys-42, Cys-45, His-55, and His-59. Residues 70-122 (VLDPSWTAQEEMALLEAVMDCGFGNWQDVANQMCTKTKEECEKHYMKHFINNP) enclose the SANT domain. Glycyl lysine isopeptide (Lys-Gly) (interchain with G-Cter in SUMO2) cross-links involve residues Lys-132 and Lys-138. Residues 347-359 (LSPSVPMTSNSGR) are compositionally biased toward polar residues. The segment at 347-372 (LSPSVPMTSNSGRRSAPPLNLTGLPG) is disordered. Positions 356-443 (NSGRRSAPPL…LIREGYITKA (88 aa)) constitute an SWIRM domain. The DNA-binding element occupies 426–435 (KTRKIYDFLI).

Interacts with GCN5 and NR3C1. Associated with the P/CAF protein in the PCAF complex. Component of the PCAF complex, at least composed of TADA2L/ADA2, TADA3L/ADA3, TAF5L/PAF65-beta, TAF6L/PAF65-alpha, TAF10/TAFII30, TAF12/TAFII20, TAF9/TAFII31 and TRRAP. Component of the ADA2A-containing complex (ATAC), composed of KAT14, KAT2A, TADA2L, TADA3L, ZZ3, MBIP, WDR5, YEATS2, CCDC101 and DR1. Interacts with CCDC134.

The protein localises to the nucleus. It localises to the chromosome. Component of the ATAC complex, a complex with histone acetyltransferase activity on histones H3 and H4. Required for the function of some acidic activation domains, which activate transcription from a distant site. Binds double-stranded DNA. Binds dinucleosomes, probably at the linker region between neighboring nucleosomes. Plays a role in chromatin remodeling. May promote TP53/p53 'Lys-321' acetylation, leading to reduced TP53 stability and transcriptional activity. May also promote XRCC6 acetylation thus facilitating cell apoptosis in response to DNA damage. This Bos taurus (Bovine) protein is Transcriptional adapter 2-alpha (TADA2A).